Here is a 484-residue protein sequence, read N- to C-terminus: Sushi domain-containing protein 4 (484 aa).

Residues 1–35 form the signal peptide; sequence MFHHADKGGKKSAFGHPVCGQIILSIILLRPPLLV. Sushi domains lie at 46 to 110, 111 to 168, 169 to 230, and 232 to 295; these read QICK…VCLS, EDCL…QPTC, QGCL…RCLD, and EACS…YCVK. Cystine bridges form between C48–C90, C76–C108, C113–C156, C138–C168, C171–C215, C201–C228, C234–C280, and C265–C293. N-linked (GlcNAc...) asparagine glycans are attached at residues N95 and N125. N-linked (GlcNAc...) asparagine glycosylation is present at N183. A helical transmembrane segment spans residues 311–331; the sequence is WKVVACTATSVLLALLLVITA. The disordered stretch occupies residues 374–484; sequence SGNYCQPPND…PLVEDGEEDC (111 aa). Composition is skewed to polar residues over residues 424-442 and 449-467; these read DSLS…SSSH and SEKT…TSPS. Positions 470-484 are enriched in acidic residues; the sequence is IADEIPLVEDGEEDC.

It is found in the membrane. This chain is Sushi domain-containing protein 4 (susd4), found in Danio rerio (Zebrafish).